The primary structure comprises 240 residues: Putative peptidoglycan hydrolase Rv2525c (240 aa).

A signal peptide (tat-type signal) is located at residues 1-33; it reads MSVSRRDVLKFAAATPGVLGLGVVASSLRAAPA.

Post-translationally, predicted to be exported by the Tat system. The position of the signal peptide cleavage has not been experimentally proven.

Its subcellular location is the secreted. The enzyme catalyses Hydrolysis of (1-&gt;4)-beta-linkages between N-acetylmuramic acid and N-acetyl-D-glucosamine residues in a peptidoglycan and between N-acetyl-D-glucosamine residues in chitodextrins.. Its pathway is cell wall degradation; peptidoglycan degradation. May function as a peptidoglycan hydrolase with glycosidase activity. In vitro, displays esterase activity toward p-nitrophenyl esters of various acyl chain length (C4 to C16), with a preference for p-nitrophenyl butyrate (C4). This chain is Putative peptidoglycan hydrolase Rv2525c, found in Mycobacterium tuberculosis (strain ATCC 25618 / H37Rv).